A 391-amino-acid chain; its full sequence is S-adenosylmethionine synthase (391 aa).

H19 contacts ATP. D21 is a Mg(2+) binding site. Position 47 (E47) interacts with K(+). L-methionine-binding residues include E60 and Q103. A flexible loop region spans residues 103–113; it reads QSADIAQGVDR. ATP-binding positions include 168-170, 236-237, D245, 251-252, A268, and K272; these read DGK, RF, and RK. D245 is an L-methionine binding site. K276 lines the L-methionine pocket.

The protein belongs to the AdoMet synthase family. Homotetramer; dimer of dimers. Mg(2+) is required as a cofactor. Requires K(+) as cofactor.

The protein resides in the cytoplasm. It carries out the reaction L-methionine + ATP + H2O = S-adenosyl-L-methionine + phosphate + diphosphate. It functions in the pathway amino-acid biosynthesis; S-adenosyl-L-methionine biosynthesis; S-adenosyl-L-methionine from L-methionine: step 1/1. Catalyzes the formation of S-adenosylmethionine (AdoMet) from methionine and ATP. The overall synthetic reaction is composed of two sequential steps, AdoMet formation and the subsequent tripolyphosphate hydrolysis which occurs prior to release of AdoMet from the enzyme. In Nitratidesulfovibrio vulgaris (strain ATCC 29579 / DSM 644 / CCUG 34227 / NCIMB 8303 / VKM B-1760 / Hildenborough) (Desulfovibrio vulgaris), this protein is S-adenosylmethionine synthase.